An 841-amino-acid chain; its full sequence is Probable outer membrane usher protein EcpC (841 aa).

A signal peptide spans 1–29 (MPLRRFSPGLKAQFAFGMVFLFVQPDASA).

The protein belongs to the EcpC/MatD family.

In terms of biological role, part of the ecpRABCDE operon, which encodes the E.coli common pilus (ECP). ECP is found in both commensal and pathogenic strains and plays a dual role in early-stage biofilm development and host cell recognition. The sequence is that of Probable outer membrane usher protein EcpC (ecpC) from Escherichia coli O127:H6 (strain E2348/69 / EPEC).